Reading from the N-terminus, the 424-residue chain is Serine--tRNA ligase (424 aa).

An L-serine-binding site is contributed by 229-231 (TAE). ATP-binding positions include 260–262 (RKE) and Val276. Position 283 (Glu283) interacts with L-serine. 347–350 (ELVS) contributes to the ATP binding site. Thr383 is an L-serine binding site.

The protein belongs to the class-II aminoacyl-tRNA synthetase family. Type-1 seryl-tRNA synthetase subfamily. In terms of assembly, homodimer. The tRNA molecule binds across the dimer.

Its subcellular location is the cytoplasm. It catalyses the reaction tRNA(Ser) + L-serine + ATP = L-seryl-tRNA(Ser) + AMP + diphosphate + H(+). The enzyme catalyses tRNA(Sec) + L-serine + ATP = L-seryl-tRNA(Sec) + AMP + diphosphate + H(+). It participates in aminoacyl-tRNA biosynthesis; selenocysteinyl-tRNA(Sec) biosynthesis; L-seryl-tRNA(Sec) from L-serine and tRNA(Sec): step 1/1. Catalyzes the attachment of serine to tRNA(Ser). Is also able to aminoacylate tRNA(Sec) with serine, to form the misacylated tRNA L-seryl-tRNA(Sec), which will be further converted into selenocysteinyl-tRNA(Sec). This chain is Serine--tRNA ligase, found in Methanosphaera stadtmanae (strain ATCC 43021 / DSM 3091 / JCM 11832 / MCB-3).